We begin with the raw amino-acid sequence, 227 residues long: dTTP/UTP pyrophosphatase (227 aa).

A disordered region spans residues 1–21 (MNDLPRAELPGSGSPNPESLI). Residue D87 is the Proton acceptor of the active site.

This sequence belongs to the Maf family. YhdE subfamily. Requires a divalent metal cation as cofactor.

The protein localises to the cytoplasm. It carries out the reaction dTTP + H2O = dTMP + diphosphate + H(+). The catalysed reaction is UTP + H2O = UMP + diphosphate + H(+). In terms of biological role, nucleoside triphosphate pyrophosphatase that hydrolyzes dTTP and UTP. May have a dual role in cell division arrest and in preventing the incorporation of modified nucleotides into cellular nucleic acids. This chain is dTTP/UTP pyrophosphatase, found in Rhodopirellula baltica (strain DSM 10527 / NCIMB 13988 / SH1).